The primary structure comprises 461 residues: MIERCLGAYRCRRIQRALRQLKVTILCLLLTVVVLRSTIGAGKFGTPEQDLDEIRQHFHARKRGEPHRVLEEIQTGGDSSSGDGGGNSGGSNNYETFDINKIFVDEGEEEKPDPNKPYTLGPKISDWDEQRSDWLAKNPSFPNFIGPNKPRVLLVTGSAPKPCENPVGDHYLLKSIKNKIDYCRLHGIEIFYNMALLDAEMAGFWAKLPLIRKLLLSHPEIEFLWWMDSDAMFTDMAFELPWERYKDYNLVMHGWNEMVYDQKNWIGLNTGSFLLRNNQWALDLLDTWAPMGPKGKIREEAGKVLTRELKDRPVFEADDQSAMVYLLATQRDAWGNKVYLESGYYLHGYWGILVDRYEEMIENYHPGLGDHRWPLVTHFVGCKPCGKFGDYPVERCLKQMDRAFNFGDNQILQIYGFTHKSLASRKVKRVRNETSNPLEMKDELGLLHPAFKAVKVQTNQV.

The Cytoplasmic portion of the chain corresponds to 1–20 (MIERCLGAYRCRRIQRALRQ). The helical; Signal-anchor for type II membrane protein transmembrane segment at 21-40 (LKVTILCLLLTVVVLRSTIG) threads the bilayer. The Lumenal portion of the chain corresponds to 41–461 (AGKFGTPEQD…KAVKVQTNQV (421 aa)). A disordered region spans residues 74 to 95 (QTGGDSSSGDGGGNSGGSNNYE). An N-linked (GlcNAc...) asparagine glycan is attached at N432.

This sequence belongs to the glycosyltransferase 34 family. Homodimer. Interacts with XXT1 and XXT5. Interacts with FUT1 and XLT2.

Its subcellular location is the golgi apparatus membrane. It carries out the reaction Transfers an alpha-D-xylosyl residue from UDP-D-xylose to a glucose residue in xyloglucan, forming an alpha-(1-&gt;6)-D-xylosyl-D-glucose linkage.. Functionally, xylosyltransferase specific to UDP-D-xylose that accepts both cellopentaose and cellohexaose as substrates, with a better use of cellohexaose, to produce xyloglucan. Adds preferentially the first xylosyl residue to the fourth glucosyl residue from the reducing end of both acceptors. Transfer one xylose mainly to the second glucose residue from the non-reducing end. The acceptor should have a minimum of four glucose residues. Associates with other xyloglucan-synthesizing enzymes to form multiprotein complexes for xyloglucan synthesis in the Golgi. In Arabidopsis thaliana (Mouse-ear cress), this protein is Xyloglucan 6-xylosyltransferase 2 (XXT2).